We begin with the raw amino-acid sequence, 351 residues long: 5-deoxyribose 1-phosphate isomerase (351 aa).

Residues 48–50 (RGA), Arg91, and Gln198 each bind substrate. The Proton donor role is filled by Asp239. 249 to 250 (NK) serves as a coordination point for substrate.

This sequence belongs to the EIF-2B alpha/beta/delta subunits family. DrdI subfamily.

It carries out the reaction 5-deoxy-alpha-D-ribose 1-phosphate = 5-deoxy-D-ribulose 1-phosphate. It participates in carbohydrate degradation. In terms of biological role, catalyzes the isomerization of 5-deoxy-alpha-D-ribose 1-phosphate to 5-deoxy-D-ribulose 1-phosphate, as part of a 5-deoxyribose salvage pathway that recycles this toxic radical SAM enzyme by-product to mainstream metabolites. The sequence is that of 5-deoxyribose 1-phosphate isomerase from Moorella thermoacetica (strain ATCC 39073 / JCM 9320).